A 342-amino-acid polypeptide reads, in one-letter code: Protein BASIC PENTACYSTEINE6 (342 aa).

Positions 41 to 67 form a coiled coil; the sequence is AIQERNLAISEKKAAVAERDMAFLQRD. The alanine-zipper stretch occupies residues 41 to 76; sequence AIQERNLAISEKKAAVAERDMAFLQRDTAIAERNNA. The disordered stretch occupies residues 143-199; the sequence is REMEPNDGLPTSPPAGSTLESAKPKRGKRVNPKATTQTAANKRGPKNQRKVKKESED. Residues 164–195 are required for nucleus and nucleolus localization; sequence AKPKRGKRVNPKATTQTAANKRGPKNQRKVKK. Residues 185–194 show a composition bias toward basic residues; sequence RGPKNQRKVK. A Nuclear localization signal motif is present at residues 192-195; sequence KVKK.

It belongs to the BBR/BPC family. Homodimer. Heterodimer with BPC4. Expressed in seedlings, leaves and pistils. Detected in the base of flowers and tips of carpels, in sepal vasculature, in young rosette, in the lateral and tip of primary roots, and in ovule at the exception of the outer integument.

The protein localises to the nucleus. Its subcellular location is the nucleolus. Functionally, transcriptional regulator that specifically binds to GA-rich elements (GAGA-repeats) present in regulatory sequences of genes involved in developmental processes. In Arabidopsis thaliana (Mouse-ear cress), this protein is Protein BASIC PENTACYSTEINE6 (BPC6).